The following is a 395-amino-acid chain: Hdr-like menaquinol oxidoreductase integral membrane subunit (395 aa).

The next 10 helical transmembrane spans lie at 15–35 (YFALVIILAAVTALGFYAYVL), 57–77 (IPYFIGLSAGSLIVSALAGVF), 88–108 (IAAYMAAAWIIAAILSIALDI), 126–146 (IFSWNAFLYSSYFVICSIYLL), 158–178 (FMAGLAVFWAVLVHSGTGAIY), 196–216 (FIVCAITSGLGLLLANLYFTF), 231–251 (LALIFAGLMMVLGYFLAVEGL), 274–294 (VFWSFWLLVIFGIAIPIIIVL), 305–325 (ITFAGILHAALVFAERFYLII), and 364–384 (IGLIAMVYLIFVVGVKLFALI).

The protein belongs to the NrfD family. As to quaternary structure, consists of five subunits: an integral membrane subunit, a cytochrome b-like subunit, a cytochrome c subunit and two iron-sulfur subunits.

It localises to the cell membrane. Has menaquinol-oxidizing activity. HmeB subunit may function as a menaquinol-oxidizing site. HmeA, HmeB and HmeE subunits may together catalyze electron transfer from menaquinol to cytochrome c. The protein is Hdr-like menaquinol oxidoreductase integral membrane subunit (hmeB) of Archaeoglobus fulgidus (strain ATCC 49558 / DSM 4304 / JCM 9628 / NBRC 100126 / VC-16).